The following is a 496-amino-acid chain: Galactan beta-1,4-galactosyltransferase GALS1 (496 aa).

The helical transmembrane segment at 22–42 threads the bilayer; it reads IIATLLALSLVMIVWNLPPYY. Positions 232-464 constitute a GT92 domain; that stretch reads DYLYCGSSLY…AKKKVTLYNK (233 aa).

The protein belongs to the glycosyltransferase 92 family. In terms of tissue distribution, expressed in root vasculature, mature leaves, trichomes, flowers, siliques and seeds.

The protein localises to the golgi apparatus membrane. Involved in the biosynthesis of beta-1,4-galactan. Can transfer galactose residues from UDP-galactose to beta-1,4-galactopentaose in vitro. Forms specifically beta-1,4-galactosyl linkages and can add successive beta-1,4-galactosyl residues to the acceptor. Beta-1,4-galactans are abundant polysaccharides in plant cell walls and are found as side-chain of rhamnogalacturonan I, which is a major component of pectin. The sequence is that of Galactan beta-1,4-galactosyltransferase GALS1 from Arabidopsis thaliana (Mouse-ear cress).